The following is a 226-amino-acid chain: MNENLFASFTTPTMMGLPIVILIIMFPSILFPSPNRLINNRLVSLQQWLVQLTSKQMLAIHNHKGQTWALMLMSLILFIGSTNLLGLLPHSFTPTTQLSMNLGMAIPLWAGTVITGFRHKTKASLAHFLPQGTPVPLIPMLVVIETISLFIQPMALAVRLTANITAGHLLMHLIGGAALALMNISTSIALITFTILILLTILEFAVALIQAYVFTLLVSLYLHDNT.

6 consecutive transmembrane segments (helical) span residues 12–32, 68–88, 97–117, 138–158, 164–184, and 200–222; these read PTMM…ILFP, WALM…LGLL, QLSM…ITGF, IPML…ALAV, ITAG…LMNI, and TILE…SLYL.

This sequence belongs to the ATPase A chain family. In terms of assembly, component of the ATP synthase complex composed at least of ATP5F1A/subunit alpha, ATP5F1B/subunit beta, ATP5MC1/subunit c (homooctomer), MT-ATP6/subunit a, MT-ATP8/subunit 8, ATP5ME/subunit e, ATP5MF/subunit f, ATP5MG/subunit g, ATP5MK/subunit k, ATP5MJ/subunit j, ATP5F1C/subunit gamma, ATP5F1D/subunit delta, ATP5F1E/subunit epsilon, ATP5PF/subunit F6, ATP5PB/subunit b, ATP5PD/subunit d, ATP5PO/subunit OSCP. ATP synthase complex consists of a soluble F(1) head domain (subunits alpha(3) and beta(3)) - the catalytic core - and a membrane F(0) domain - the membrane proton channel (subunits c, a, 8, e, f, g, k and j). These two domains are linked by a central stalk (subunits gamma, delta, and epsilon) rotating inside the F1 region and a stationary peripheral stalk (subunits F6, b, d, and OSCP). Interacts with DNAJC30; interaction is direct.

It is found in the mitochondrion inner membrane. The enzyme catalyses H(+)(in) = H(+)(out). In terms of biological role, subunit a, of the mitochondrial membrane ATP synthase complex (F(1)F(0) ATP synthase or Complex V) that produces ATP from ADP in the presence of a proton gradient across the membrane which is generated by electron transport complexes of the respiratory chain. ATP synthase complex consist of a soluble F(1) head domain - the catalytic core - and a membrane F(1) domain - the membrane proton channel. These two domains are linked by a central stalk rotating inside the F(1) region and a stationary peripheral stalk. During catalysis, ATP synthesis in the catalytic domain of F(1) is coupled via a rotary mechanism of the central stalk subunits to proton translocation. With the subunit c (ATP5MC1), forms the proton-conducting channel in the F(0) domain, that contains two crucial half-channels (inlet and outlet) that facilitate proton movement from the mitochondrial intermembrane space (IMS) into the matrix. Protons are taken up via the inlet half-channel and released through the outlet half-channel, following a Grotthuss mechanism. In Felis catus (Cat), this protein is ATP synthase F(0) complex subunit a.